Reading from the N-terminus, the 245-residue chain is Orotidine 5'-phosphate decarboxylase (245 aa).

Substrate contacts are provided by residues D22, K44, D71–T80, T131, R192, Q201, G221, and R222. The active-site Proton donor is K73.

Belongs to the OMP decarboxylase family. Type 1 subfamily. In terms of assembly, homodimer.

The catalysed reaction is orotidine 5'-phosphate + H(+) = UMP + CO2. It functions in the pathway pyrimidine metabolism; UMP biosynthesis via de novo pathway; UMP from orotate: step 2/2. Functionally, catalyzes the decarboxylation of orotidine 5'-monophosphate (OMP) to uridine 5'-monophosphate (UMP). The sequence is that of Orotidine 5'-phosphate decarboxylase from Klebsiella pneumoniae (strain 342).